Consider the following 198-residue polypeptide: Probable GTP-binding protein EngB (198 aa).

An EngB-type G domain is found at 21-195 (NFSEVAFLGR…EDIIINQTLG (175 aa)). Residues 29 to 36 (GRSNVGKS), 56 to 60 (GKTQL), 81 to 84 (DLPG), 151 to 154 (TKCD), and 174 to 176 (VSN) each bind GTP. 2 residues coordinate Mg(2+): Ser36 and Thr58.

It belongs to the TRAFAC class TrmE-Era-EngA-EngB-Septin-like GTPase superfamily. EngB GTPase family. The cofactor is Mg(2+).

In terms of biological role, necessary for normal cell division and for the maintenance of normal septation. The protein is Probable GTP-binding protein EngB of Campylobacter jejuni subsp. jejuni serotype O:2 (strain ATCC 700819 / NCTC 11168).